The following is a 351-amino-acid chain: Methionine import ATP-binding protein MetN (351 aa).

In terms of domain architecture, ABC transporter spans 2 to 241 (IVTEALTKAF…PQHAVTRAFV (240 aa)). An ATP-binding site is contributed by 38–45 (GRSGAGKS).

It belongs to the ABC transporter superfamily. Methionine importer (TC 3.A.1.24) family. The complex is composed of two ATP-binding proteins (MetN), two transmembrane proteins (MetI) and a solute-binding protein (MetQ).

It localises to the cell inner membrane. The catalysed reaction is L-methionine(out) + ATP + H2O = L-methionine(in) + ADP + phosphate + H(+). The enzyme catalyses D-methionine(out) + ATP + H2O = D-methionine(in) + ADP + phosphate + H(+). Functionally, part of the ABC transporter complex MetNIQ involved in methionine import. Responsible for energy coupling to the transport system. The chain is Methionine import ATP-binding protein MetN from Rhodospirillum rubrum (strain ATCC 11170 / ATH 1.1.1 / DSM 467 / LMG 4362 / NCIMB 8255 / S1).